A 203-amino-acid polypeptide reads, in one-letter code: Glutathione S-transferase 2 (203 aa).

Residues methionine 1–glycine 78 enclose the GST N-terminal domain. Glutathione-binding positions include tyrosine 8, tryptophan 38, lysine 42, glycine 48–methionine 50, and glutamine 62–serine 63. Residues aspartate 80–phenylalanine 203 enclose the GST C-terminal domain.

The protein belongs to the GST superfamily. Sigma family. Homodimer.

The enzyme catalyses RX + glutathione = an S-substituted glutathione + a halide anion + H(+). Its function is as follows. Conjugation of reduced glutathione to a wide number of exogenous and endogenous hydrophobic electrophiles. The polypeptide is Glutathione S-transferase 2 (GST2) (Manduca sexta (Tobacco hawkmoth)).